An 894-amino-acid polypeptide reads, in one-letter code: Transcriptional activator/repressor GIS1 (894 aa).

In terms of domain architecture, JmjN spans 12 to 53; it reads VPVFKPSMMEFANFQYFIDEITKFGIENGIVKVIPPKEWLEL. Ser70 carries the post-translational modification Phosphoserine. Positions 90–110 form a coiled coil; it reads ENEYDNKSYNLTQWKNLAESL. The JmjC domain maps to 170-324; the sequence is PYDLTLWNLN…VRKQPLKCGC (155 aa). The Bipartite nuclear localization signal signature appears at 316-332; that stretch reads RKQPLKCGCGNKKEERK. Positions 324-355 are disordered; the sequence is CGNKKEERKSGPFSNLSYDSNESEQRGSITDN. Residues 335–354 show a composition bias toward polar residues; sequence PFSNLSYDSNESEQRGSITD. Phosphoserine is present on Ser343. The stretch at 361-385 forms a coiled coil; that stretch reads QKVRSFDELLNHSSQELQNLEDNKN. Residues 521–554 are compositionally biased toward low complexity; the sequence is NISSTNNSANNSSSNNNVSTVPSSMMHSSTLNGT. The tract at residues 521–558 is disordered; that stretch reads NISSTNNSANNSSSNNNVSTVPSSMMHSSTLNGTSGLG. 5 positions are modified to phosphoserine: Ser690, Ser694, Ser696, Ser734, and Ser747. The segment covering 756 to 768 has biased composition (low complexity); sequence LNGNDNSNLDSNN. The tract at residues 756 to 810 is disordered; that stretch reads LNGNDNSNLDSNNFDYSFTGNKQESNPSILNNNTNNNDNYRTSSMNNNGNNYQAH. Composition is skewed to polar residues over residues 769-785 and 795-810; these read FDYS…PSIL and YRTS…YQAH. Residues 828-851 form a C2H2-type 1 zinc finger; sequence YICRECNRQFSSGHHLTRHKKSVH. Residues 857 to 882 form a C2H2-type 2; atypical zinc finger; the sequence is HSCPRCGKRFKRRDHVLQHLNKKIPC.

The protein localises to the nucleus. In terms of biological role, transcription factor involved in the regulation of gene expression upon nutrient starvation. Recognizes and binds to the post-diauxic-shift element 5'-T[AT]AGGGAT-3' in the promoter region. Can act as a transcriptional activator (e.g. of stress genes like SSA3, HSP12 and HSP26) as well as a repressor (e.g. of pyrophosphate phosphatase DPP1). GIS1 also acts as a DNA damage-responsive transcriptional repressor of photolyase PHR1. This is Transcriptional activator/repressor GIS1 (GIS1) from Saccharomyces cerevisiae (strain ATCC 204508 / S288c) (Baker's yeast).